The primary structure comprises 348 residues: Protein RecA (348 aa).

Residue 64 to 71 (GPESSGKT) coordinates ATP.

Belongs to the RecA family. Monomer; forms higher-order oligomers. Interacts with RecU. Interacts with DprA (smf). Interacts with RecD2.

The protein resides in the cytoplasm. Its subcellular location is the nucleoid. In terms of biological role, multifunctional protein involved in homologous recombination, DNA repair and competence. Can catalyze the hydrolysis of (d)ATP in the presence of single-stranded (ss)DNA; prefers dATP at least in vitro, catalyzes the dATP-dependent uptake of ssDNA by duplex DNA, and the dATP-dependent hybridization of homologous ssDNA (strand exchange). RecA-ATP cannot catalyze homologous DNA strand exchange; SsbA and DprA activate strand exchange by RecA-ATP. It interacts with LexA causing its activation and leading to its autocatalytic cleavage. Hydrolysis of ATP in the presence of ssDNA is partially inhibited by RecU. Required for DNA transformation; protects transforming DNA from degradation, possibly in combination with DprA. Blocks replication of both leading and lagging strand DNA in the presence of RecO and SsbA; RecD2 is able to overcome this blockage. Recruited to repair centers (RCs), foci that are the site of double-stranded DNA break(s), after RecN. Concomitant with the appearance of RecO at the RCs, RecA forms threads that extend from RCs toward the opposite cell half, possibly searching for sequence homology along the sister chromosome. The threads disappear after about 2 hours. Thread formation is absolutely dependent on RecJ or AadAB. Thread formation is also dependent on RarA. The polypeptide is Protein RecA (Bacillus subtilis (strain 168)).